We begin with the raw amino-acid sequence, 354 residues long: MNGTEGPNFYIPMSNKTGVVRSPFEYPQYYLAEPWQYSILCAYMFLLILLGFPINFMTLYVTIQHKKLRTPLNYILLNLAFANHFMVLCGFTVTMYSSMNGYFILGATGCYVEGFFATLGGEIALWSLVVLAIERYVVVCKPMSNFRFSENHAVMGVAFTWIMALSCAVPPLLGWSRYIPEGMQCSCGVDYYTLKPEVNNESFVIYMFVVHFTIPLIIIFFCYGRLVCTVKEAAAQQQESATTQKAEKEVTRMVIIMVVFFLICWVPYASVAFFIFSNQGSEFGPIFMTVPAFFAKSSSIYNPVIYIMLNKQFRNCMITTLCCGKNPFGEDDASSAATSKTEASSVSSSQVSPA.

Residues 1 to 36 are Extracellular-facing; that stretch reads MNGTEGPNFYIPMSNKTGVVRSPFEYPQYYLAEPWQ. N-linked (GlcNAc...) asparagine glycans are attached at residues asparagine 2 and asparagine 15. Residues 37–61 traverse the membrane as a helical segment; sequence YSILCAYMFLLILLGFPINFMTLYV. Residues 62–73 are Cytoplasmic-facing; the sequence is TIQHKKLRTPLN. A helical transmembrane segment spans residues 74-96; it reads YILLNLAFANHFMVLCGFTVTMY. Over 97–110 the chain is Extracellular; that stretch reads SSMNGYFILGATGC. Cysteine 110 and cysteine 187 form a disulfide bridge. A helical membrane pass occupies residues 111–133; sequence YVEGFFATLGGEIALWSLVVLAI. The short motif at 134 to 136 is the 'Ionic lock' involved in activated form stabilization element; sequence ERY. Over 134-152 the chain is Cytoplasmic; the sequence is ERYVVVCKPMSNFRFSENH. A helical transmembrane segment spans residues 153-173; that stretch reads AVMGVAFTWIMALSCAVPPLL. Over 174–202 the chain is Extracellular; it reads GWSRYIPEGMQCSCGVDYYTLKPEVNNES. A helical transmembrane segment spans residues 203 to 224; sequence FVIYMFVVHFTIPLIIIFFCYG. At 225–252 the chain is on the cytoplasmic side; the sequence is RLVCTVKEAAAQQQESATTQKAEKEVTR. Residues 253–274 form a helical membrane-spanning segment; it reads MVIIMVVFFLICWVPYASVAFF. At 275–286 the chain is on the extracellular side; sequence IFSNQGSEFGPI. The helical transmembrane segment at 287-308 threads the bilayer; that stretch reads FMTVPAFFAKSSSIYNPVIYIM. Position 296 is an N6-(retinylidene)lysine (lysine 296). The Cytoplasmic portion of the chain corresponds to 309 to 354; the sequence is LNKQFRNCMITTLCCGKNPFGEDDASSAATSKTEASSVSSSQVSPA. Residues cysteine 322 and cysteine 323 are each lipidated (S-palmitoyl cysteine). The segment at 331 to 354 is disordered; the sequence is DDASSAATSKTEASSVSSSQVSPA. The segment covering 334-354 has biased composition (low complexity); the sequence is SSAATSKTEASSVSSSQVSPA.

Belongs to the G-protein coupled receptor 1 family. Opsin subfamily. In terms of processing, contains one covalently linked retinal chromophore. Upon light absorption, the covalently bound 11-cis-retinal is converted to all-trans-retinal. After hydrolysis of the Schiff base and release of the covalently bound all-trans-retinal, active rhodopsin is regenerated by binding of a fresh molecule of 11-cis-retinal.

It localises to the membrane. It is found in the cell projection. The protein resides in the cilium. Its subcellular location is the photoreceptor outer segment. Photoreceptor required for image-forming vision at low light intensity. Required for photoreceptor cell viability after birth. Light-induced isomerization of 11-cis to all-trans retinal triggers a conformational change that activates signaling via G-proteins. Subsequent receptor phosphorylation mediates displacement of the bound G-protein alpha subunit by arrestin and terminates signaling. The chain is Rhodopsin (RHO) from Bufo bufo (European toad).